The sequence spans 266 residues: MKAKKYYGQNFISDLNLINKIVDVLDQNKDQLIIEIGPGKGALTKELVKRFDKVVVIEIDQDMVEILKTKFNHSNLEIIQADVLEIDLKQLISKYDYKNISIISNTPYYITSEILFKTLQISDLLTKAVFMLQKEVALRICSNKNENNYNNLSIACQFYSQRNFEFVVNKKMFYPIPKVDSAIISLTFNNIYKKQINDDKKFIEFVRTLFNNKRKTILNNLNNIIQNKNKALEYLKMLNISSNLRPEQLDIDEYIKLFNLIYISNF.

S-adenosyl-L-methionine contacts are provided by asparagine 10, isoleucine 12, glycine 37, glutamate 58, aspartate 82, and asparagine 105.

This sequence belongs to the class I-like SAM-binding methyltransferase superfamily. rRNA adenine N(6)-methyltransferase family. RsmA subfamily.

It localises to the cytoplasm. It catalyses the reaction adenosine(1518)/adenosine(1519) in 16S rRNA + 4 S-adenosyl-L-methionine = N(6)-dimethyladenosine(1518)/N(6)-dimethyladenosine(1519) in 16S rRNA + 4 S-adenosyl-L-homocysteine + 4 H(+). In terms of biological role, specifically dimethylates two adjacent adenosines (A1518 and A1519) in the loop of a conserved hairpin near the 3'-end of 16S rRNA in the 30S particle. May play a critical role in biogenesis of 30S subunits. In Mycoplasma capricolum subsp. capricolum (strain California kid / ATCC 27343 / NCTC 10154), this protein is Ribosomal RNA small subunit methyltransferase A.